Consider the following 382-residue polypeptide: Serine/threonine-protein phosphatase 2A activator 2 (382 aa).

The interval 363-382 (SHKGVPTLGNRPGIKPIPFD) is disordered.

This sequence belongs to the PTPA-type PPIase family.

The protein localises to the cytoplasm. It carries out the reaction [protein]-peptidylproline (omega=180) = [protein]-peptidylproline (omega=0). In terms of biological role, PPIases accelerate the folding of proteins. It catalyzes the cis-trans isomerization of proline imidic peptide bonds in oligopeptides. Acts as a regulatory subunit for PP2A-like phosphatases modulating their activity or substrate specificity, probably by inducing a conformational change in the catalytic subunit, a direct target of the PPIase. Can reactivate inactive phosphatase PP2A-phosphatase methylesterase complexes (PP2Ai) in presence of ATP and Mg(2+) by dissociating the inactive form from the complex. The sequence is that of Serine/threonine-protein phosphatase 2A activator 2 (RRD2) from Cryptococcus neoformans var. neoformans serotype D (strain B-3501A) (Filobasidiella neoformans).